Reading from the N-terminus, the 476-residue chain is Glutamate--tRNA ligase (476 aa).

The short motif at Pro9–Thr19 is the 'HIGH' region element. Residues Lys248–Arg252 carry the 'KMSKS' region motif. Lys251 serves as a coordination point for ATP.

It belongs to the class-I aminoacyl-tRNA synthetase family. Glutamate--tRNA ligase type 1 subfamily. As to quaternary structure, monomer.

The protein localises to the cytoplasm. The enzyme catalyses tRNA(Glu) + L-glutamate + ATP = L-glutamyl-tRNA(Glu) + AMP + diphosphate. Catalyzes the attachment of glutamate to tRNA(Glu) in a two-step reaction: glutamate is first activated by ATP to form Glu-AMP and then transferred to the acceptor end of tRNA(Glu). This chain is Glutamate--tRNA ligase, found in Prochlorococcus marinus (strain MIT 9313).